The primary structure comprises 803 residues: Translation initiation factor IF-2 (803 aa).

Residues 65 to 75 (PDKVEEKKEHT) show a composition bias toward basic and acidic residues. Positions 65–186 (PDKVEEKKEH…PKSRKSKTLK (122 aa)) are disordered. A compositionally biased stretch (basic residues) spans 175–185 (NKPKSRKSKTL). One can recognise a tr-type G domain in the interval 300-468 (IRPPVVTIMG…ILLTADAALE (169 aa)). The segment at 309–316 (GHVDHGKT) is G1. A GTP-binding site is contributed by 309–316 (GHVDHGKT). The G2 stretch occupies residues 334 to 338 (GITQH). Residues 355 to 358 (DTPG) are G3. GTP is bound by residues 355–359 (DTPGH) and 409–412 (NKID). Positions 409-412 (NKID) are G4. The segment at 445-447 (SAK) is G5.

This sequence belongs to the TRAFAC class translation factor GTPase superfamily. Classic translation factor GTPase family. IF-2 subfamily.

The protein resides in the cytoplasm. Its function is as follows. One of the essential components for the initiation of protein synthesis. Protects formylmethionyl-tRNA from spontaneous hydrolysis and promotes its binding to the 30S ribosomal subunits. Also involved in the hydrolysis of GTP during the formation of the 70S ribosomal complex. The polypeptide is Translation initiation factor IF-2 (Tropheryma whipplei (strain Twist) (Whipple's bacillus)).